A 327-amino-acid polypeptide reads, in one-letter code: rRNA 2'-O-methyltransferase fibrillarin (327 aa).

The interval 1 to 95 (MKPGFSPRGG…NQSGKNVMVE (95 aa)) is disordered. Residues 7–80 (PRGGGFGGRG…GGNRGRGGGR (74 aa)) are compositionally biased toward gly residues. Residues Arg8, Arg15, Arg21, Arg24, Arg28, and Arg31 each carry the asymmetric dimethylarginine modification. Glycyl lysine isopeptide (Lys-Gly) (interchain with G-Cter in SUMO2) cross-links involve residues Lys90, Lys108, and Lys115. Lys108 is modified (N6-acetyllysine). Ser122 carries the post-translational modification Phosphoserine. Lys127 is modified (N6-acetyllysine). Residues Ser130 and Ser132 each carry the phosphoserine modification. Glycyl lysine isopeptide (Lys-Gly) (interchain with G-Cter in SUMO2) cross-links involve residues Lys137, Lys149, and Lys164. S-adenosyl-L-methionine-binding positions include 178–179 (TT) and 197–198 (EF). 2 positions are modified to N6-acetyllysine: Lys211 and Lys212. S-adenosyl-L-methionine contacts are provided by residues 222–223 (DA) and 242–245 (DVAQ).

Belongs to the methyltransferase superfamily. Fibrillarin family. As to quaternary structure, component of box C/D small nucleolar ribonucleoprotein (snoRNP) particles that contain SNU13, FBL, NOP5 and NOP56, plus a guide RNA. It is associated with the U3, U8, U13, X and Y small nuclear RNAs. Component of several ribosomal and nucleolar protein complexes. Part of the small subunit (SSU) processome, composed of more than 70 proteins and the RNA chaperone small nucleolar RNA (snoRNA) U3. Interacts with PRMT5 and UTP20. Interacts with DDX5 and C1QBP. Interacts with NOL11. Interacts with PIH1D1. Interacts with RRP1B. Interacts with NOLC1. Interacts with SDE2. Interacts with NOP2 and NOP56. In terms of processing, by homology to other fibrillarins, some or all of the N-terminal domain arginines are modified to asymmetric dimethylarginine (DMA). Post-translationally, ubiquitinated. Ubiquitination leads to proteasomal degradation. Deubiquitinated by USP36. Acetylated by CREBBP/CBP, preventing methylation of 'Gln-105' of histone H2A (H2AQ104me), without affecting rRNA methylation. Deacetylation by SIRT7 restores methylation of 'Gln-105' of histone H2A (H2AQ104me).

It is found in the nucleus. The protein localises to the nucleolus. It localises to the nucleoplasm. The enzyme catalyses L-glutaminyl-[histone H2A] + S-adenosyl-L-methionine = N(5)-methyl-L-glutaminyl-[histone H2A] + S-adenosyl-L-homocysteine + H(+). It catalyses the reaction a ribonucleotide in rRNA + S-adenosyl-L-methionine = a 2'-O-methylribonucleotide in rRNA + S-adenosyl-L-homocysteine + H(+). It carries out the reaction a ribonucleotide in U6 snRNA + S-adenosyl-L-methionine = a 2'-O-methylribonucleotide in U6 snRNA + S-adenosyl-L-homocysteine + H(+). Functionally, S-adenosyl-L-methionine-dependent methyltransferase that has the ability to methylate both RNAs and proteins. Involved in pre-rRNA processing by catalyzing the site-specific 2'-hydroxyl methylation of ribose moieties in pre-ribosomal RNA. Site specificity is provided by a guide RNA that base pairs with the substrate. Methylation occurs at a characteristic distance from the sequence involved in base pairing with the guide RNA. Probably catalyzes 2'-O-methylation of U6 snRNAs in box C/D RNP complexes. U6 snRNA 2'-O-methylation is required for mRNA splicing fidelity. Also acts as a protein methyltransferase by mediating methylation of 'Gln-105' of histone H2A (H2AQ104me), a modification that impairs binding of the FACT complex and is specifically present at 35S ribosomal DNA locus. Part of the small subunit (SSU) processome, first precursor of the small eukaryotic ribosomal subunit. During the assembly of the SSU processome in the nucleolus, many ribosome biogenesis factors, an RNA chaperone and ribosomal proteins associate with the nascent pre-rRNA and work in concert to generate RNA folding, modifications, rearrangements and cleavage as well as targeted degradation of pre-ribosomal RNA by the RNA exosome. The sequence is that of rRNA 2'-O-methyltransferase fibrillarin from Mus musculus (Mouse).